The chain runs to 547 residues: Heme-binding protein A (547 aa).

The signal sequence occupies residues 1 to 18; the sequence is MKLKATLTLAAATLVLAA. Cysteine 19 carries N-palmitoyl cysteine lipidation. A lipid anchor (S-diacylglycerol cysteine) is attached at cysteine 19.

Belongs to the bacterial solute-binding protein 5 family.

Its subcellular location is the cell inner membrane. Important role in heme acquisition or metabolism. The sequence is that of Heme-binding protein A (hbpA) from Haemophilus influenzae (strain ATCC 51907 / DSM 11121 / KW20 / Rd).